A 25-amino-acid polypeptide reads, in one-letter code: Flagellar filament core protein flaB3 (25 aa).

The protein belongs to the bacterial flagellin family. In terms of assembly, the flagellum consists of an outer layer composed of two sheath proteins, flaA1 (44 kDa) and flaA2 (35 kDa) around a core that contains three proteins flaB1 (37 kDa), flaB2 (34 kDa) and flaB3 (32 kDa).

The protein resides in the periplasmic flagellum. It is found in the periplasm. Component of the core of the flagella. The polypeptide is Flagellar filament core protein flaB3 (flaB3) (Brachyspira hyodysenteriae (Treponema hyodysenteriae)).